The primary structure comprises 313 residues: Protein-glutamine deamidase Cif (313 aa).

Active-site residues include Cys-128, His-186, and Gln-205.

This sequence belongs to the Cif family.

The protein localises to the secreted. It is found in the host nucleus. It catalyses the reaction L-glutaminyl-[protein] + H2O = L-glutamyl-[protein] + NH4(+). Protein-glutamine deamidase effector that inhibits the host cell cycle and other key cellular processes such as the actin network and programmed-cell death. Acts by mediating the side chain deamidation of 'Gln-40' of host NEDD8, converting it to glutamate, thereby abolishing the activity of cullin-RING-based E3 ubiquitin-protein ligase complexes (CRL complexes). Inactivation of CRL complexes prevents ubiquitination and subsequent degradation of the cyclin-dependent kinase inhibitors CDKN1A/p21 and CDKN1B/p27, leading to G1 and G2 cell cycle arrests in host cells. Deamidation of 'Gln-40' of host NEDD8 also triggers macrophage-specific programmed cell death. Also able to catalyze deamidation of 'Gln-40' of host ubiquitin in vitro; however, NEDD8 constitutes the preferred substrate in vivo. In Photorhabdus laumondii subsp. laumondii (strain DSM 15139 / CIP 105565 / TT01) (Photorhabdus luminescens subsp. laumondii), this protein is Protein-glutamine deamidase Cif.